We begin with the raw amino-acid sequence, 136 residues long: Ig heavy chain V-A2 region P-MU-3 (136 aa).

An N-terminal signal peptide occupies residues 1–19 (METGLRWLLLVAVLKGVQC). The residue at position 20 (glutamine 20) is a Pyrrolidone carboxylic acid. Residues 20–127 (QSVKESEGGL…ENEFFNAIWG (108 aa)) enclose the Ig-like domain.

The chain is Ig heavy chain V-A2 region P-MU-3 from Oryctolagus cuniculus (Rabbit).